A 217-amino-acid polypeptide reads, in one-letter code: Uracil-DNA glycosylase (217 aa).

The active-site Proton acceptor is the D62.

Belongs to the uracil-DNA glycosylase (UDG) superfamily. UNG family.

The protein localises to the cytoplasm. The catalysed reaction is Hydrolyzes single-stranded DNA or mismatched double-stranded DNA and polynucleotides, releasing free uracil.. In terms of biological role, excises uracil residues from the DNA which can arise as a result of misincorporation of dUMP residues by DNA polymerase or due to deamination of cytosine. This Streptococcus pneumoniae (strain JJA) protein is Uracil-DNA glycosylase.